Consider the following 293-residue polypeptide: 4-hydroxy-tetrahydrodipicolinate synthase (293 aa).

A pyruvate-binding site is contributed by T45. Y133 acts as the Proton donor/acceptor in catalysis. K162 (schiff-base intermediate with substrate) is an active-site residue. Pyruvate is bound at residue I204.

It belongs to the DapA family. Homotetramer; dimer of dimers.

The protein localises to the cytoplasm. The enzyme catalyses L-aspartate 4-semialdehyde + pyruvate = (2S,4S)-4-hydroxy-2,3,4,5-tetrahydrodipicolinate + H2O + H(+). It participates in amino-acid biosynthesis; L-lysine biosynthesis via DAP pathway; (S)-tetrahydrodipicolinate from L-aspartate: step 3/4. Its function is as follows. Catalyzes the condensation of (S)-aspartate-beta-semialdehyde [(S)-ASA] and pyruvate to 4-hydroxy-tetrahydrodipicolinate (HTPA). The sequence is that of 4-hydroxy-tetrahydrodipicolinate synthase from Brucella abortus biovar 1 (strain 9-941).